Reading from the N-terminus, the 217-residue chain is Cysteine-rich protein 3 (217 aa).

Residues 3–64 (WTCPRCQQPV…KPCYGALFGP (62 aa)) form the LIM zinc-binding 1 domain. The interval 84-112 (PGCTTPLSPSSFSPPRPRTGLPQGKKSPP) is disordered. An LIM zinc-binding 2 domain is found at 122 to 183 (SLCPGCGEPV…VPCYGYLFGP (62 aa)).

In terms of tissue distribution, expressed in most tissues, but not in skeletal muscle.

It localises to the cytoplasm. This chain is Cysteine-rich protein 3 (CRIP3), found in Homo sapiens (Human).